A 522-amino-acid chain; its full sequence is ARS-binding protein 1 (522 aa).

The HTH CENPB-type domain occupies 70-144; sequence DVKRNRPPKY…RKRHILHAIN (75 aa). Residue T460 is modified to Phosphothreonine.

Interacts with mcm10.

Its subcellular location is the nucleus. Binds, preferentially, to the Maundrell ARS consensus sequence within ARS3002. This is ARS-binding protein 1 (abp1) from Schizosaccharomyces pombe (strain 972 / ATCC 24843) (Fission yeast).